The following is a 47-amino-acid chain: High light-inducible protein HliC (47 aa).

Residues 1 to 14 lie on the Cytoplasmic side of the membrane; sequence MNNENSKFGFTAFA. Positions 15 to 20 match the Chlorophyll-binding motif motif; the sequence is ENWNGR. A transmembrane span lies at residues 15-36; the sequence is ENWNGRLAMIGFSSALILELVS. At 37–47 the chain is on the lumenal, thylakoid side; it reads GQGVLHFFGIL.

It belongs to the Hlip family. In terms of assembly, forms heterodimers with both HliA and HliB; these are associated with photosystem II (PSII) assembly intermediates containing CP47 (psbB). In the absence of CP47 (psbB) and HliD, forms a homooligomer in vivo that binds 2 chlorophyll a and 1 beta-carotenoid per monomer. Cofractionates in an approximately 50 kDa fraction the thylakoid membrane with HliD. Associated in vivo with monomeric PSII. Purified in several chlorophyll- and carotenoid-containing complexes, including photosystem II (PSII) assembly intermediate complex RCII* (iD1, D1, D2, PsbE, PsbF, PsbI, Ycf39, Ycf48, HliC and HliD) and the Ycf39-Hlip complex (Ycf39, HliC, HliD and pigments).

The protein resides in the cellular thylakoid membrane. Forms a number of heteromers involved in photosystem II (PSII) assembly and/or repair under high light stress. Required for binding of chlorophyll and carotenoids by the Ycf39-Hlip complex. The Ycf39-Hlip complex binds D1 at an early stage of PSII assembly along with Ycf48, ribosomes and ChlG, the last enzyme in chlorophyll biosynthesis; it may be involved in chlorophyll reuse and delivery to D1 in the initial stages of PSII assembly. HliA-HliC and HliB-HliC heterodimers bind chlorophyll and carotenoids in a 1:0.6 ratio. Complexes bind mostly beta-carotenoid, but minor amounts of echinenone and beta-crytoxanthin are also detected. The complexes efficiently quench chlorophyll fluorescence, contributing to photoprotection. Deletion of 4 to 5 members of the Hlip family suggests the proteins are involved in regulation of chlorophyll biosynthesis, in stabilization of chlorophyll-binding proteins and/or in reuse of chlorophylls, and may regulate tetrapyrrole biosynthesis. Might bind chlorophyll and/or carotenoids in association with HliD (called the ScpBE pair). Functionally, the Hlips might regulate tetrapyrrole biosynthesis, maybe at the level of aminolevulinic acid synthesis and probably stabilize PSII assembly intermediates. This is High light-inducible protein HliC (hliC) from Synechocystis sp. (strain ATCC 27184 / PCC 6803 / Kazusa).